The primary structure comprises 285 residues: Nucleotide-binding protein Cphy_0331 (285 aa).

Residue 8 to 15 (GMSGAGKS) coordinates ATP. 59-62 (DIRS) is a GTP binding site.

Belongs to the RapZ-like family.

Displays ATPase and GTPase activities. The chain is Nucleotide-binding protein Cphy_0331 from Lachnoclostridium phytofermentans (strain ATCC 700394 / DSM 18823 / ISDg) (Clostridium phytofermentans).